The chain runs to 351 residues: S-adenosylmethionine:tRNA ribosyltransferase-isomerase (351 aa).

The protein belongs to the QueA family. Monomer.

The protein resides in the cytoplasm. The enzyme catalyses 7-aminomethyl-7-carbaguanosine(34) in tRNA + S-adenosyl-L-methionine = epoxyqueuosine(34) in tRNA + adenine + L-methionine + 2 H(+). The protein operates within tRNA modification; tRNA-queuosine biosynthesis. Its function is as follows. Transfers and isomerizes the ribose moiety from AdoMet to the 7-aminomethyl group of 7-deazaguanine (preQ1-tRNA) to give epoxyqueuosine (oQ-tRNA). The polypeptide is S-adenosylmethionine:tRNA ribosyltransferase-isomerase (Hahella chejuensis (strain KCTC 2396)).